The chain runs to 130 residues: ATP synthase epsilon chain (130 aa).

The protein belongs to the ATPase epsilon chain family. As to quaternary structure, F-type ATPases have 2 components, CF(1) - the catalytic core - and CF(0) - the membrane proton channel. CF(1) has five subunits: alpha(3), beta(3), gamma(1), delta(1), epsilon(1). CF(0) has three main subunits: a, b and c.

Its subcellular location is the cell membrane. Its function is as follows. Produces ATP from ADP in the presence of a proton gradient across the membrane. The sequence is that of ATP synthase epsilon chain from Nocardia farcinica (strain IFM 10152).